The primary structure comprises 479 residues: Aspartyl/glutamyl-tRNA(Asn/Gln) amidotransferase subunit B (479 aa).

It belongs to the GatB/GatE family. GatB subfamily. As to quaternary structure, heterotrimer of A, B and C subunits.

The catalysed reaction is L-glutamyl-tRNA(Gln) + L-glutamine + ATP + H2O = L-glutaminyl-tRNA(Gln) + L-glutamate + ADP + phosphate + H(+). It catalyses the reaction L-aspartyl-tRNA(Asn) + L-glutamine + ATP + H2O = L-asparaginyl-tRNA(Asn) + L-glutamate + ADP + phosphate + 2 H(+). Allows the formation of correctly charged Asn-tRNA(Asn) or Gln-tRNA(Gln) through the transamidation of misacylated Asp-tRNA(Asn) or Glu-tRNA(Gln) in organisms which lack either or both of asparaginyl-tRNA or glutaminyl-tRNA synthetases. The reaction takes place in the presence of glutamine and ATP through an activated phospho-Asp-tRNA(Asn) or phospho-Glu-tRNA(Gln). The sequence is that of Aspartyl/glutamyl-tRNA(Asn/Gln) amidotransferase subunit B from Streptococcus pyogenes serotype M12 (strain MGAS2096).